The sequence spans 811 residues: RFX-like DNA-binding protein RFX1 (811 aa).

Disordered stretches follow at residues 48-92 (EPTS…TYLP) and 111-156 (LLHQ…QRQP). A compositionally biased stretch (low complexity) spans 51–70 (SRGSNDNSNGPSNGSSVNSN). The segment covering 140–149 (SPTPTQPPAQ) has biased composition (pro residues). Ser173 bears the Phosphoserine mark. Positions 181–222 (KSEETLNNNPPTAAKRTNTFPSIPSSTKKQKTSQEKRISSIS) are disordered. Over residues 185–204 (TLNNNPPTAAKRTNTFPSIP) the composition is skewed to polar residues. The segment at residues 285-360 (ALLWLMKNCK…YHYCGLKLTV (76 aa)) is a DNA-binding region (RFX-type winged-helix). Over residues 377-391 (LVHNNDPISPLSSPS) the composition is skewed to low complexity. Residues 377–461 (LVHNNDPISP…AANNPTGTLS (85 aa)) form a disordered region. A compositionally biased stretch (polar residues) spans 409–428 (NRKSLSRTGSPVKQSSNDNP). Over residues 434 to 445 (ESQHPNETEANK) the composition is skewed to basic and acidic residues.

The protein belongs to the RFX family.

The protein is RFX-like DNA-binding protein RFX1 (RFX1) of Saccharomyces cerevisiae (strain ATCC 204508 / S288c) (Baker's yeast).